Here is a 116-residue protein sequence, read N- to C-terminus: MKPSFRNTSPSFRNRSKPYFRNRSKPYFRNRSKPSFRNTSKRFSPNQQSFRKRLSTIRPGEQIDYKNISLINRFISEQGKILSRRTNRLALKQQRLIARAVKQARILCLIPFLSLK.

The segment covering 1 to 13 (MKPSFRNTSPSFR) has biased composition (polar residues). Residues 1–51 (MKPSFRNTSPSFRNRSKPYFRNRSKPYFRNRSKPSFRNTSKRFSPNQQSFR) are disordered. Residues 14–34 (NRSKPYFRNRSKPYFRNRSKP) are compositionally biased toward basic residues. The span at 35 to 49 (SFRNTSKRFSPNQQS) shows a compositional bias: polar residues.

It belongs to the bacterial ribosomal protein bS18 family. As to quaternary structure, part of the 30S ribosomal subunit.

It localises to the plastid. The protein resides in the chloroplast. The protein is Small ribosomal subunit protein bS18c of Cryptomeria japonica (Japanese cedar).